Here is an 85-residue protein sequence, read N- to C-terminus: UPF0291 protein SSA_1878 (85 aa).

Residues 58-85 (GNDVTPEKLRQVQREKGLHGRSLDDPES) are disordered. Over residues 62-85 (TPEKLRQVQREKGLHGRSLDDPES) the composition is skewed to basic and acidic residues.

Belongs to the UPF0291 family.

Its subcellular location is the cytoplasm. The polypeptide is UPF0291 protein SSA_1878 (Streptococcus sanguinis (strain SK36)).